The primary structure comprises 298 residues: Inosose dehydratase (298 aa).

The protein belongs to the IolE/MocC family. Glutathione is required as a cofactor. It depends on Co(2+) as a cofactor. The cofactor is Mn(2+).

The enzyme catalyses scyllo-inosose = 3D-3,5/4-trihydroxycyclohexane-1,2-dione + H2O. It participates in polyol metabolism; myo-inositol degradation into acetyl-CoA; acetyl-CoA from myo-inositol: step 2/7. Its function is as follows. Catalyzes the dehydration of inosose (2-keto-myo-inositol, 2KMI or 2,4,6/3,5-pentahydroxycyclohexanone) to 3D-(3,5/4)-trihydroxycyclohexane-1,2-dione (D-2,3-diketo-4-deoxy-epi-inositol). The polypeptide is Inosose dehydratase (Clostridium botulinum (strain Eklund 17B / Type B)).